The primary structure comprises 531 residues: GMP synthase [glutamine-hydrolyzing] (531 aa).

The region spanning 20 to 213 is the Glutamine amidotransferase type-1 domain; sequence KILIVDFGSQ…VRKVAGLKGD (194 aa). Catalysis depends on cysteine 97, which acts as the Nucleophile. Catalysis depends on residues histidine 187 and glutamate 189. The region spanning 214-406 is the GMPS ATP-PPase domain; the sequence is WTMRAFREEA…LGLPDVFVGR (193 aa). 241–247 provides a ligand contact to ATP; it reads SGGVDSA.

In terms of assembly, homodimer.

The catalysed reaction is XMP + L-glutamine + ATP + H2O = GMP + L-glutamate + AMP + diphosphate + 2 H(+). Its pathway is purine metabolism; GMP biosynthesis; GMP from XMP (L-Gln route): step 1/1. Its function is as follows. Catalyzes the synthesis of GMP from XMP. This is GMP synthase [glutamine-hydrolyzing] from Afipia carboxidovorans (strain ATCC 49405 / DSM 1227 / KCTC 32145 / OM5) (Oligotropha carboxidovorans).